Reading from the N-terminus, the 170-residue chain is Fibroblast growth factor 2 (170 aa).

The interval 1–21 (VGGRGRGRGTAAAARREPGGA) is disordered. Arg4, Arg6, and Arg8 each carry omega-N-methylarginine; alternate. Residues Arg4, Arg6, and Arg8 each carry the symmetric dimethylarginine; alternate modification. Residues 9–21 (GTAAAARREPGGA) are compositionally biased toward low complexity. Asn51 provides a ligand contact to heparin. Tyr97 carries the phosphotyrosine; by TEC modification. Residue Lys110 forms a Glycyl lysine isopeptide (Lys-Gly) (interchain with G-Cter in SUMO1) linkage. The segment at 143–159 (KRTGQYKLGSKTGPGQK) is heparin-binding.

This sequence belongs to the heparin-binding growth factors family. Monomer. Homodimer. Interacts with FGFR1, FGFR2, FGFR3 and FGFR4. Affinity between fibroblast growth factors (FGFs) and their receptors is increased by heparan sulfate glycosaminoglycans that function as coreceptors. Interacts with CSPG4, FGFBP1 and TEC. Found in a complex with FGFBP1, FGF1 and FGF2. Interacts with FGFBP3. Interacts with integrin ITGAV:ITGB3; the interaction is required for FGF2 signaling. Interacts with SNORC (via the extracellular domain). Interacts with glypican GPC3. In terms of processing, the N-terminus of isoform 2 is blocked. Post-translationally, phosphorylation at Tyr-97 regulates FGF2 unconventional secretion.

It is found in the secreted. The protein resides in the nucleus. Acts as a ligand for FGFR1, FGFR2, FGFR3 and FGFR4. Also acts as an integrin ligand which is required for FGF2 signaling. Binds to integrin ITGAV:ITGB3. Plays an important role in the regulation of cell survival, cell division, cell differentiation and cell migration. Functions as a potent mitogen in vitro. Can induce angiogenesis. Mediates phosphorylation of ERK1/2 and thereby promotes retinal lens fiber differentiation. The protein is Fibroblast growth factor 2 (FGF2) of Cavia porcellus (Guinea pig).